A 482-amino-acid chain; its full sequence is Kynurenine 3-monooxygenase (482 aa).

The protein belongs to the aromatic-ring hydroxylase family. KMO subfamily. It depends on FAD as a cofactor.

Its subcellular location is the mitochondrion outer membrane. It catalyses the reaction L-kynurenine + NADPH + O2 + H(+) = 3-hydroxy-L-kynurenine + NADP(+) + H2O. The protein operates within cofactor biosynthesis; NAD(+) biosynthesis; quinolinate from L-kynurenine: step 1/3. Catalyzes the hydroxylation of L-kynurenine (L-Kyn) to form 3-hydroxy-L-kynurenine (L-3OHKyn). Required for synthesis of quinolinic acid. The sequence is that of Kynurenine 3-monooxygenase from Phaeosphaeria nodorum (strain SN15 / ATCC MYA-4574 / FGSC 10173) (Glume blotch fungus).